The following is a 308-amino-acid chain: MLVYNQEELVRFVEEAKQYARYGKVADYIPALGKANPNELSIAIYTPDDEVVSAGDVTVKVTLQSISKIIALALVLIDRGEDEVFHKVGMEPTDYPFHSIAKLEEKPAKPLNPMINAGALVVTSMIQGGSVSERLERLLAFVRRLAGNERISYSDEVARSEFETAFLNRSLCYFLKQHRIIDEDVEELMELYTKQCAIEMTCIDLARIGLVLALDGRDPHSSEPLMPLDVARICKTFMVTCGMYNSSGEFAIKVGIPAKSGVSGGILAAVPGRCGIGVFGPALDDKGNSLTGVKLLERLSKTYSLSIF.

Ser-65, Asn-116, Glu-161, Asn-168, Tyr-192, Tyr-244, and Val-262 together coordinate substrate.

This sequence belongs to the glutaminase family. Homotetramer.

It catalyses the reaction L-glutamine + H2O = L-glutamate + NH4(+). This is Glutaminase from Geobacillus kaustophilus (strain HTA426).